The primary structure comprises 192 residues: Adenylate kinase (192 aa).

10-15 (GAGKGT) provides a ligand contact to ATP. An NMP region spans residues 30–59 (STGDMLREVIAKETEVGKKAKAIISSGALV). AMP contacts are provided by residues T31, R36, 57 to 59 (ALV), 85 to 88 (GYPR), and Q92. The tract at residues 126–142 (RRVQETVAAGGQVRLDD) is LID. Residue R127 coordinates ATP. R139 and R150 together coordinate AMP. An ATP-binding site is contributed by I178.

This sequence belongs to the adenylate kinase family. As to quaternary structure, monomer.

It localises to the cytoplasm. It carries out the reaction AMP + ATP = 2 ADP. The protein operates within purine metabolism; AMP biosynthesis via salvage pathway; AMP from ADP: step 1/1. Catalyzes the reversible transfer of the terminal phosphate group between ATP and AMP. Plays an important role in cellular energy homeostasis and in adenine nucleotide metabolism. The chain is Adenylate kinase from Bartonella tribocorum (strain CIP 105476 / IBS 506).